Reading from the N-terminus, the 110-residue chain is Nucleoid-associated protein Tola_2216 (110 aa).

Belongs to the YbaB/EbfC family. As to quaternary structure, homodimer.

The protein resides in the cytoplasm. It is found in the nucleoid. Binds to DNA and alters its conformation. May be involved in regulation of gene expression, nucleoid organization and DNA protection. The polypeptide is Nucleoid-associated protein Tola_2216 (Tolumonas auensis (strain DSM 9187 / NBRC 110442 / TA 4)).